Reading from the N-terminus, the 442-residue chain is D-serine dehydratase (442 aa).

N6-(pyridoxal phosphate)lysine is present on K118.

This sequence belongs to the serine/threonine dehydratase family. DsdA subfamily. As to quaternary structure, monomer. It depends on pyridoxal 5'-phosphate as a cofactor.

It catalyses the reaction D-serine = pyruvate + NH4(+). This Escherichia coli O6:H1 (strain CFT073 / ATCC 700928 / UPEC) protein is D-serine dehydratase.